Here is a 963-residue protein sequence, read N- to C-terminus: Thrombospondin-4 (963 aa).

An N-terminal signal peptide occupies residues 1-26 (MPAPRAAAAAFLLLHLVLQPWQRTSA). In terms of domain architecture, Laminin G-like spans 29–194 (TPQVFDLLPS…LEELKLVVRG (166 aa)). The Cell attachment site signature appears at 138-140 (RGD). The 40-residue stretch at 288-327 (PTRHCDSSPCFRGVRCTDTRDGFQCGPCPDGYTGNGITCS) folds into the EGF-like 1 domain. 21 disulfide bridges follow: Cys292–Cys303, Cys297–Cys312, Cys315–Cys326, Cys332–Cys343, Cys337–Cys352, Cys355–Cys379, Cys385–Cys396, Cys390–Cys405, Cys408–Cys420, Cys426–Cys440, Cys434–Cys450, Cys452–Cys463, Cys479–Cys484, Cys489–Cys509, Cys525–Cys545, Cys548–Cys568, Cys584–Cys604, Cys607–Cys627, Cys645–Cys665, Cys685–Cys705, and Cys721–Cys942. In terms of domain architecture, EGF-like 2; calcium-binding spans 328-365 (DVDECKYHPCYPGVRCVNLAPGFRCDACPVGFTGPMVQ). Positions 381–418 (DVDECQNGACVLNSICINTLGSYRCGPCKPGYTGDQTR) constitute an EGF-like 3; calcium-binding domain. The EGF-like 4 domain occupies 422-464 (TERSCRNPEQNPCSVHAQCIEERQGDVTCVCGVGWAGDGYVCG). TSP type-3 repeat units lie at residues 465 to 497 (KDVD…NSGQ), 498 to 533 (EDAD…NIDQ), 534 to 556 (RNSD…NNDQ), 557 to 592 (KDTD…NRDQ), 593 to 615 (QDRD…NPNQ), 616 to 653 (SDVD…NSSQ), 654 to 693 (LDTD…NPAQ), and 694 to 729 (EDSN…EITL). The short motif at 564–566 (RGD) is the Cell attachment site element. The segment at 579-676 (NILDNCPRVP…DDDDNDGIPD (98 aa)) is disordered. N-linked (GlcNAc...) asparagine glycans are attached at residues Asn614 and Asn650. Residues 642 to 654 (TDNCPTVINSSQL) show a composition bias toward polar residues. Residues 662 to 673 (GDECDDDDDNDG) are compositionally biased toward acidic residues. The TSP C-terminal domain maps to 733-947 (RAYQTVVLDP…LKYRCNDTIP (215 aa)). The N-linked (GlcNAc...) asparagine glycan is linked to Asn943.

This sequence belongs to the thrombospondin family. As to quaternary structure, homopentamer; disulfide-linked. Interacts with PTBP3. Interacts (via EGF-like 3; calcium-binding domain) with ATF6 and facilitates its processing, activation and nuclear translocation. Interacts with NOTCH1. Heart. Up-regulated in the heart in response to ischemic injury and pathology (at protein level). Astrocytes; expressed at high levels in subventricular zone (SVZ)-derived astrocytes and at low levels in cortical astrocytes. In response to peripheral nerve injury, significantly up-regulated in the dorsal spinal cord (at protein level).

The protein resides in the endoplasmic reticulum. Its subcellular location is the sarcoplasmic reticulum. It localises to the secreted. The protein localises to the extracellular space. It is found in the extracellular matrix. Adhesive glycoprotein that mediates cell-to-cell and cell-to-matrix interactions and is involved in various processes including cellular proliferation, migration, adhesion and attachment, inflammatory response to CNS injury, regulation of vascular inflammation and adaptive responses of the heart to pressure overload and in myocardial function and remodeling. Binds to structural extracellular matrix (ECM) proteins and modulates the ECM in response to tissue damage, contributing to cardioprotective and adaptive ECM remodeling. Plays a role in ER stress response, via its interaction with the activating transcription factor 6 alpha (ATF6) which produces adaptive ER stress response factors and protects myocardium from pressure overload. May contribute to spinal presynaptic hypersensitivity and neuropathic pain states after peripheral nerve injury. May play a role in regulating protective astrogenesis from the subventricular zone (SVZ) niche after injury in a NOTCH1-dependent manner. The chain is Thrombospondin-4 (Thbs4) from Mus musculus (Mouse).